The following is a 54-amino-acid chain: uncharacterized protein (54 aa).

Residues 21–43 (SYVVCLYMCGSDCACICVLACVV) traverse the membrane as a helical segment.

It is found in the membrane. This is an uncharacterized protein from Saccharomyces cerevisiae (strain ATCC 204508 / S288c) (Baker's yeast).